Here is a 386-residue protein sequence, read N- to C-terminus: S-adenosylmethionine synthase (386 aa).

Glutamate 8 serves as a coordination point for Mg(2+). Residue histidine 14 participates in ATP binding. Glutamate 42 contacts K(+). L-methionine contacts are provided by glutamate 55 and glutamine 98. Residues 166–168 (DGK), 234–237 (SGRF), aspartate 245, 251–252 (RK), alanine 268, lysine 272, and lysine 276 each bind ATP. L-methionine is bound at residue aspartate 245. Lysine 276 is a binding site for L-methionine.

It belongs to the AdoMet synthase family. Homotetramer. Mn(2+) serves as cofactor. The cofactor is Mg(2+). Co(2+) is required as a cofactor. Requires K(+) as cofactor.

Its subcellular location is the cytoplasm. The enzyme catalyses L-methionine + ATP + H2O = S-adenosyl-L-methionine + phosphate + diphosphate. It functions in the pathway amino-acid biosynthesis; S-adenosyl-L-methionine biosynthesis; S-adenosyl-L-methionine from L-methionine: step 1/1. In terms of biological role, catalyzes the formation of S-adenosylmethionine from methionine and ATP. The reaction comprises two steps that are both catalyzed by the same enzyme: formation of S-adenosylmethionine (AdoMet) and triphosphate, and subsequent hydrolysis of the triphosphate. In Ostreococcus tauri, this protein is S-adenosylmethionine synthase (METK).